A 346-amino-acid chain; its full sequence is Zinc transporter YKE4 (346 aa).

The Extracellular segment spans residues methionine 1–lysine 2. The chain crosses the membrane as a helical span at residues alanine 3–histidine 23. Over histidine 24–alanine 69 the chain is Cytoplasmic. A helical membrane pass occupies residues isoleucine 70 to leucine 90. Residues arginine 91–threonine 99 lie on the Extracellular side of the membrane. Residues leucine 100–isoleucine 120 traverse the membrane as a helical segment. Residues proline 121 to glycine 126 lie on the Cytoplasmic side of the membrane. Residues valine 127–leucine 147 form a helical membrane-spanning segment. The Extracellular portion of the chain corresponds to aspartate 148–glycine 202. N-linked (GlcNAc...) asparagine glycosylation occurs at asparagine 184. A helical membrane pass occupies residues isoleucine 203–valine 223. Over threonine 224 to glutamine 252 the chain is Cytoplasmic. A helical transmembrane segment spans residues alanine 253 to glycine 273. 2 N-linked (GlcNAc...) asparagine glycosylation sites follow: asparagine 274 and asparagine 285. At asparagine 274 to methionine 290 the chain is on the extracellular side. Residues leucine 291–leucine 311 form a helical membrane-spanning segment. The Cytoplasmic segment spans residues histidine 312–glutamate 322. A helical membrane pass occupies residues phenylalanine 323–methionine 343. The Extracellular segment spans residues aspartate 344–histidine 346.

The protein belongs to the ZIP transporter (TC 2.A.5) family. KE4/Catsup subfamily.

It is found in the endoplasmic reticulum membrane. Functionally, zinc transporter whose role depends on the zinc status of the cells. It helps to balance zinc levels between the cytosol and the secretory pathway. It transports zinc into the secretory pathway in a zinc-adequate environment and in a high zinc medium. In high zinc medium, transport of zinc into the secretory pathway is a way to eliminate zinc from the cytosol. Under low cytosolic zinc conditions, it removes zinc from the secretory pathway and acts as a zinc importer that helps to alleviate ER stress. This is Zinc transporter YKE4 (YKE4) from Saccharomyces cerevisiae (strain ATCC 204508 / S288c) (Baker's yeast).